We begin with the raw amino-acid sequence, 340 residues long: Phosphate acyltransferase (340 aa).

Belongs to the PlsX family. In terms of assembly, homodimer. Probably interacts with PlsY.

The protein localises to the cytoplasm. It carries out the reaction a fatty acyl-[ACP] + phosphate = an acyl phosphate + holo-[ACP]. Its pathway is lipid metabolism; phospholipid metabolism. Functionally, catalyzes the reversible formation of acyl-phosphate (acyl-PO(4)) from acyl-[acyl-carrier-protein] (acyl-ACP). This enzyme utilizes acyl-ACP as fatty acyl donor, but not acyl-CoA. In Leptospira biflexa serovar Patoc (strain Patoc 1 / ATCC 23582 / Paris), this protein is Phosphate acyltransferase.